The chain runs to 181 residues: RING-H2 finger protein ATL56 (181 aa).

The disordered stretch occupies residues 1-24 (MPPTNNYRISGEPPSTTPSHPPPK). Residues 15-24 (STTPSHPPPK) show a composition bias toward pro residues. Residues 32-52 (LFLVGVIMFSIFFLFLVLIGI) traverse the membrane as a helical segment. Residues 110–152 (CVVCFDGFRQGQWCRNLPGCGHVFHRKCVDTWLLKASTCPICR) form an RING-type; atypical zinc finger.

This sequence belongs to the RING-type zinc finger family. ATL subfamily.

Its subcellular location is the membrane. The catalysed reaction is S-ubiquitinyl-[E2 ubiquitin-conjugating enzyme]-L-cysteine + [acceptor protein]-L-lysine = [E2 ubiquitin-conjugating enzyme]-L-cysteine + N(6)-ubiquitinyl-[acceptor protein]-L-lysine.. It participates in protein modification; protein ubiquitination. The protein is RING-H2 finger protein ATL56 (ATL56) of Arabidopsis thaliana (Mouse-ear cress).